We begin with the raw amino-acid sequence, 215 residues long: Adenylate kinase (215 aa).

10–15 (GAGKGT) provides a ligand contact to ATP. The tract at residues 30–59 (STGDMFRAAMKNNTELGKKAKSFMDNGDLV) is NMP. Residues T31, R36, 57-59 (DLV), 85-88 (GFPR), and Q92 each bind AMP. The segment at 126 to 163 (GRWICRTCGKTYHEIYNPPKVPGKCDLDGGELYQREDD) is LID. R127 contributes to the ATP binding site. Residues C130 and C133 each contribute to the Zn(2+) site. 136–137 (TY) provides a ligand contact to ATP. C150 and D153 together coordinate Zn(2+). AMP is bound by residues R160 and R171. Q199 is a binding site for ATP.

Belongs to the adenylate kinase family. In terms of assembly, monomer.

It is found in the cytoplasm. It catalyses the reaction AMP + ATP = 2 ADP. It participates in purine metabolism; AMP biosynthesis via salvage pathway; AMP from ADP: step 1/1. Functionally, catalyzes the reversible transfer of the terminal phosphate group between ATP and AMP. Plays an important role in cellular energy homeostasis and in adenine nucleotide metabolism. The polypeptide is Adenylate kinase (Listeria innocua serovar 6a (strain ATCC BAA-680 / CLIP 11262)).